Consider the following 523-residue polypeptide: Leucine-rich repeat transmembrane neuronal protein 1 (523 aa).

The first 34 residues, 1–34, serve as a signal peptide directing secretion; sequence MDFLLLGLCLHWLLRRPSGVVLCLLGACFQMLPA. The LRRNT domain maps to 35-63; that stretch reads APSGCPGQCRCEGRLLYCEALNLTEAPHN. The Extracellular segment spans residues 35–428; the sequence is APSGCPGQCR…HAENAVQIHK (394 aa). N-linked (GlcNAc...) asparagine glycosylation is found at N56 and N63. LRR repeat units lie at residues 64–87, 89–111, 112–135, 136–159, 161–183, 184–207, 209–231, 233–255, 256–278, and 280–302; these read LSGLLGLSLRYNSLSELRAGQFTG, MQLTWLYLDHNHICSVQGDAFQK, LRRVKELTLSSNQITELANTTFRP, MPNLRSVDLSYNKLQALAPDLFHG, RKLTTLHMRANAIQFVPVRIFQD, CRSLKFLDIGYNQLKSLARNSFAG, FKLTELHLEHNDLIKVNFAHFPR, ISLNSLCLRRNKVAIVVSSLDWV, WNLEKMDLSGNEIEYMEPHVFET, and PYLQSLQLDSNRLTYIEPRILNS. N130 carries an N-linked (GlcNAc...) asparagine glycan. Positions 314–365 constitute an LRRCT domain; sequence NLWDCGRNVCALASWLSNFQGRYDANLQCASPEYAQGEDVLDAVYAFHLCED. N381 carries N-linked (GlcNAc...) asparagine glycosylation. A helical membrane pass occupies residues 429–449; sequence VVTGTMALIFSFLIVVLVLYV. At 450–523 the chain is on the cytoplasmic side; that stretch reads SWKCFPASLR…HQQPARECEV (74 aa). Residues 520-523 carry the May be involved in DLG4-binding motif; that stretch reads ECEV.

It belongs to the LRRTM family. As to quaternary structure, interacts with DLG4.

The protein localises to the cell membrane. It is found in the postsynaptic cell membrane. Exhibits strong synaptogenic activity, restricted to excitatory presynaptic differentiation, acting at both pre- and postsynaptic level. This is Leucine-rich repeat transmembrane neuronal protein 1 (Lrrtm1) from Rattus norvegicus (Rat).